Reading from the N-terminus, the 143-residue chain is Large ribosomal subunit protein uL15 (143 aa).

The tract at residues 1 to 59 is disordered; the sequence is MELNGIKPSLGAKHAKRRVGRGIGSGLGKTAGRGHKGQKSRAGGYHKVGFEGGQMPMQR. A compositionally biased stretch (gly residues) spans 21–31; sequence RGIGSGLGKTA.

Belongs to the universal ribosomal protein uL15 family. As to quaternary structure, part of the 50S ribosomal subunit.

Functionally, binds to the 23S rRNA. This chain is Large ribosomal subunit protein uL15, found in Polaromonas sp. (strain JS666 / ATCC BAA-500).